A 335-amino-acid polypeptide reads, in one-letter code: MNQWMELADRVLAGAEVTDEEALSILHCPDEDILLLMHGAFHIRKHFYGKKVKLNMIMNAKSGLCPENCGYCSQSAISKAPIESYRMVNKETLLEGAKRAHDLNIGTYCIVASGRGPSNREVDQVVDAVQEIKETYGLKICACLGLLKPEQAKRLKDAGVDRYNHNLNTSQRNHSNITTSHTYDDRVNTVEIAKESGLSPCSGAIIGMKETKQDVIDIAKSLKALDADSIPVNFLHAIDGTPLEGVNELNPLYCLKVLALFRFINPSKEIRISGGREVNLRTLQPLGLYAANSIFVGDYLTTAGQEETEDHKMLSDLGFEVESVEEMKASLSAKS.

Positions 47–276 (FYGKKVKLNM…SKEIRISGGR (230 aa)) constitute a Radical SAM core domain. Residues Cys65, Cys69, and Cys72 each contribute to the [4Fe-4S] cluster site. The [2Fe-2S] cluster site is built by Cys109, Cys141, Cys201, and Arg271.

It belongs to the radical SAM superfamily. Biotin synthase family. Homodimer. [4Fe-4S] cluster is required as a cofactor. [2Fe-2S] cluster serves as cofactor.

The catalysed reaction is (4R,5S)-dethiobiotin + (sulfur carrier)-SH + 2 reduced [2Fe-2S]-[ferredoxin] + 2 S-adenosyl-L-methionine = (sulfur carrier)-H + biotin + 2 5'-deoxyadenosine + 2 L-methionine + 2 oxidized [2Fe-2S]-[ferredoxin]. The protein operates within cofactor biosynthesis; biotin biosynthesis; biotin from 7,8-diaminononanoate: step 2/2. In terms of biological role, catalyzes the conversion of dethiobiotin (DTB) to biotin by the insertion of a sulfur atom into dethiobiotin via a radical-based mechanism. The sequence is that of Biotin synthase from Bacillus subtilis (strain 168).